Here is a 550-residue protein sequence, read N- to C-terminus: Chaperonin GroEL (550 aa).

ATP-binding positions include 30–33, lysine 51, 87–91, glycine 415, and aspartate 496; these read TLGP and DGTTT.

This sequence belongs to the chaperonin (HSP60) family. Forms a cylinder of 14 subunits composed of two heptameric rings stacked back-to-back. Interacts with the co-chaperonin GroES.

The protein resides in the cytoplasm. It carries out the reaction ATP + H2O + a folded polypeptide = ADP + phosphate + an unfolded polypeptide.. Its function is as follows. Together with its co-chaperonin GroES, plays an essential role in assisting protein folding. The GroEL-GroES system forms a nano-cage that allows encapsulation of the non-native substrate proteins and provides a physical environment optimized to promote and accelerate protein folding. The polypeptide is Chaperonin GroEL (Rickettsia prowazekii (strain Madrid E)).